A 93-amino-acid chain; its full sequence is YcgL domain-containing protein VIBHAR_01387 (93 aa).

In terms of domain architecture, YcgL spans 1–84 (MLCSIYKSSR…PPENLLEKYK (84 aa)).

This chain is YcgL domain-containing protein VIBHAR_01387, found in Vibrio campbellii (strain ATCC BAA-1116).